Reading from the N-terminus, the 261-residue chain is Cytochrome c oxidase subunit 3 (261 aa).

Over 1 to 15 (MTHQTHAYHMVNPSP) the chain is Mitochondrial matrix. A helical transmembrane segment spans residues 16 to 34 (WPLTGALSALLMTSGLAMW). Over 35-40 (FHFNST) the chain is Mitochondrial intermembrane. The chain crosses the membrane as a helical span at residues 41–66 (ILLMIGLTTNTLTMYQWWRDVIREST). Residues 67–72 (FQGHHT) lie on the Mitochondrial matrix side of the membrane. Residues 73–105 (PTVQKGLRYGMILFIISEVLFFTGFFWAFYHSS) traverse the membrane as a helical segment. Residues 106–128 (LAPTPELGGCWPPTGIHPLNPLE) are Mitochondrial intermembrane-facing. A helical membrane pass occupies residues 129–152 (VPLLNTSVLLASGVSITWAHHSLM). Over 153-155 (EGN) the chain is Mitochondrial matrix. A helical transmembrane segment spans residues 156-183 (RYPMLQALFITIALGVYFTLLQASEYYE). Residues 184-190 (APFTISD) lie on the Mitochondrial intermembrane side of the membrane. A helical transmembrane segment spans residues 191–223 (GIYGSTFFVATGFHGLHVIIGSTFLIVCFFRQL). Over 224-232 (KFHFTSNHH) the chain is Mitochondrial matrix. A helical transmembrane segment spans residues 233 to 256 (FGFEAAAWYWHFVDVVWLFLYVSI). Residues 257 to 261 (YWWGS) are Mitochondrial intermembrane-facing.

The protein belongs to the cytochrome c oxidase subunit 3 family. Component of the cytochrome c oxidase (complex IV, CIV), a multisubunit enzyme composed of 14 subunits. The complex is composed of a catalytic core of 3 subunits MT-CO1, MT-CO2 and MT-CO3, encoded in the mitochondrial DNA, and 11 supernumerary subunits COX4I, COX5A, COX5B, COX6A, COX6B, COX6C, COX7A, COX7B, COX7C, COX8 and NDUFA4, which are encoded in the nuclear genome. The complex exists as a monomer or a dimer and forms supercomplexes (SCs) in the inner mitochondrial membrane with NADH-ubiquinone oxidoreductase (complex I, CI) and ubiquinol-cytochrome c oxidoreductase (cytochrome b-c1 complex, complex III, CIII), resulting in different assemblies (supercomplex SCI(1)III(2)IV(1) and megacomplex MCI(2)III(2)IV(2)).

The protein localises to the mitochondrion inner membrane. The enzyme catalyses 4 Fe(II)-[cytochrome c] + O2 + 8 H(+)(in) = 4 Fe(III)-[cytochrome c] + 2 H2O + 4 H(+)(out). Its function is as follows. Component of the cytochrome c oxidase, the last enzyme in the mitochondrial electron transport chain which drives oxidative phosphorylation. The respiratory chain contains 3 multisubunit complexes succinate dehydrogenase (complex II, CII), ubiquinol-cytochrome c oxidoreductase (cytochrome b-c1 complex, complex III, CIII) and cytochrome c oxidase (complex IV, CIV), that cooperate to transfer electrons derived from NADH and succinate to molecular oxygen, creating an electrochemical gradient over the inner membrane that drives transmembrane transport and the ATP synthase. Cytochrome c oxidase is the component of the respiratory chain that catalyzes the reduction of oxygen to water. Electrons originating from reduced cytochrome c in the intermembrane space (IMS) are transferred via the dinuclear copper A center (CU(A)) of subunit 2 and heme A of subunit 1 to the active site in subunit 1, a binuclear center (BNC) formed by heme A3 and copper B (CU(B)). The BNC reduces molecular oxygen to 2 water molecules using 4 electrons from cytochrome c in the IMS and 4 protons from the mitochondrial matrix. The chain is Cytochrome c oxidase subunit 3 (MT-CO3) from Raphicerus melanotis (Cape grysbok).